Here is a 270-residue protein sequence, read N- to C-terminus: Ribosomal RNA small subunit methyltransferase A (270 aa).

S-adenosyl-L-methionine-binding residues include N15, I17, G42, E64, D89, and N108.

The protein belongs to the class I-like SAM-binding methyltransferase superfamily. rRNA adenine N(6)-methyltransferase family. RsmA subfamily.

It localises to the cytoplasm. It catalyses the reaction adenosine(1518)/adenosine(1519) in 16S rRNA + 4 S-adenosyl-L-methionine = N(6)-dimethyladenosine(1518)/N(6)-dimethyladenosine(1519) in 16S rRNA + 4 S-adenosyl-L-homocysteine + 4 H(+). Specifically dimethylates two adjacent adenosines (A1518 and A1519) in the loop of a conserved hairpin near the 3'-end of 16S rRNA in the 30S particle. May play a critical role in biogenesis of 30S subunits. The sequence is that of Ribosomal RNA small subunit methyltransferase A from Anaplasma marginale (strain Florida).